The primary structure comprises 384 residues: Viral protein 1 (384 aa).

This chain is Viral protein 1, found in Chaetoceros setoense (Chaetoceros setoense DNA virus).